Reading from the N-terminus, the 428-residue chain is PGL/p-HBAD biosynthesis glycosyltransferase MRA_2985 (428 aa).

The interval 1–23 (MEETSVAGDPGPDAGTSTAPNAA) is disordered.

It belongs to the UDP-glycosyltransferase family.

Its function is as follows. Involved in glycosylation steps downstream of mono-O-methyl-glycosyl-p-hydroxybenzoic acid derivative (p-HBAD I) and 2-O-methyl-rhamnosyl-phenolphthiocerol dimycocerosate (mycoside B) during the p-hydroxybenzoic acid derivatives (p-HBAD) and glycosylated phenolphthiocerol dimycocerosates (PGL) biosynthesis. The sequence is that of PGL/p-HBAD biosynthesis glycosyltransferase MRA_2985 from Mycobacterium tuberculosis (strain ATCC 25177 / H37Ra).